A 309-amino-acid polypeptide reads, in one-letter code: Gamma-hemolysin component A (309 aa).

The signal sequence occupies residues 1–29; sequence MIKNKILTATLAVGLIAPLANPFIEISKA.

It belongs to the aerolysin family. As to quaternary structure, toxicity requires sequential binding and synergistic association of a class S and a class F component which form heterooligomeric complexes. HlgA (class S) associates with HlgB (class F) thus forming an AB toxin in strains producing both gamma-hemolysins and leukocidins. HlgA and LukF-PV can also form a complex.

It is found in the secreted. Functionally, toxin that seems to act by forming pores in the membrane of the cell. Has a hemolytic and a leucotoxic activity. This is Gamma-hemolysin component A (hlgA) from Staphylococcus aureus (strain MRSA252).